The primary structure comprises 490 residues: Secretory immunoglobulin A-binding protein EsiB (490 aa).

Positions 1 to 23 (MKKSLLAVMLTGLFALVSLPALG) are cleaved as a signal peptide. Sel1-like repeat units follow at residues 39–74 (AKAQLELGYRYFQGNETTKDLTQAMDWFRRAAEQGY), 77–109 (AEYVLGLRYMNGEGVPQDYAQAVIWYKKAALKG), 111–145 (PQAQQNLGVMYHEGNGVKVDKAESVKWFRLAAEQG), 153–182 (MGDAYFEGDGVTRDYVMAREWYSKAAEQGN), 185–218 (SCNQLGYMYSRGLGVERNDAISAQWYRKSATSGD), 222–254 (QLHLADMYYFGIGVTQDYTQSRVLFSQSAEQGN), 256–290 (IAQFRLGYILEQGLAGAKEPLKALEWYRKSAEQGN), 291–327 (SDGQYYLAHLYDKGAEGVAKNREQAISWYTKSAEQGD), 328–361 (ATAQANLGAIYFRLGSEEEHKKAVEWFRKAAAKG), 364–397 (AAQFNLGNALLQGKGVKKDEQQAAIWMRKAAEQG), and 399–430 (SAAQVQLGEIYYYGLGVERDYVQAWAWFDTAS). Positions 122, 159, and 161 each coordinate Mg(2+).

In terms of assembly, interacts with human secreted IgA (SIgA) at least via resides 244-260. Requires Mg(2+) as cofactor.

Its subcellular location is the cell surface. Functionally, upon host (human neutrophil) infection interferes with productive FCAR signaling, inhibiting secreted IgA (SIgA) effector functions and probably avoiding neutrophil activation. Inhibits the SIgA-mediated oxidative burst by neutrophils, decreases generation of ROS (reactive oxygen species) by neutrophils and reduces chemotaxis by neutrophils, all of which are SIgA effector functions used to stimulate the immune response. Does not block SIgA-binding to its receptor (FCAR) on neutrophils, but it decreases SIgA-stimulated phosphorylation of cytoplasmic proteins, including phospholipase C-gamma and MAP kinases, all actions that may be advantageous to the pathogen. The polypeptide is Secretory immunoglobulin A-binding protein EsiB (Escherichia coli O6:H1 (strain CFT073 / ATCC 700928 / UPEC)).